A 415-amino-acid polypeptide reads, in one-letter code: Multidrug resistance protein MdtA (415 aa).

Residues 1–21 (MKGSYKSRWVIVIVVVIAAIA) form the signal peptide. Polar residues predominate over residues 31-46 (DSQSAAPGATKQAQQS). Disordered regions lie at residues 31-56 (DSQS…GMRA) and 391-415 (VEAQ…GARS). Residues 399–415 (PEEKATSREYAKKGARS) show a composition bias toward basic and acidic residues.

It belongs to the membrane fusion protein (MFP) (TC 8.A.1) family. Part of a tripartite efflux system composed of MdtA, MdtB and MdtC.

It localises to the cell inner membrane. Functionally, the MdtABC tripartite complex confers resistance against novobiocin and deoxycholate. The sequence is that of Multidrug resistance protein MdtA from Escherichia coli O45:K1 (strain S88 / ExPEC).